Here is a 541-residue protein sequence, read N- to C-terminus: Sorting nexin-27 (541 aa).

A disordered region spans residues 1–26 (MADEDGEGIHPAAPHRNGGGGGGGGS). Residues 17-26 (NGGGGGGGGS) are compositionally biased toward gly residues. The region spanning 43–136 (VVRIVKSESG…ELILTVLSVP (94 aa)) is the PDZ domain. Ser51 and Ser62 each carry phosphoserine. A PX domain is found at 161-269 (QAVPISVPTY…EFLSESDENY (109 aa)). The Ras-associating domain maps to 273–362 (SDVELRVALP…TCLTIRKWLF (90 aa)). An FERM-like region F1 region spans residues 273 to 362 (SDVELRVALP…TCLTIRKWLF (90 aa)). The segment at 373–421 (NDLAVTYFFHQAVDDVKKGYIKAEEKSYQLQKLYEQRKMVMYLNMLRTC) is FERM-like region F2. Positions 425–525 (NEIIFPHCAC…RVFCELKWRK (101 aa)) are FERM-like region F3.

As to quaternary structure, core component of the SNX27-retromer, a multiprotein complex composed of SNX27, the WASH complex and the retromer complex. Interacts (via PDZ domain) with a number of target transmembrane proteins (via PDZ-binding motif): ABCC4, ADRB2, ARHGEF7, GRIA1, GRIA2, GRIN1, GRIN2A GRIN2C, KCNJ6, KCNJ9 and SLC2A1/GLUT1. Interacts (via the FERM-like regions) with the WASH complex. Interacts with SNX1. Interacts with CYTIP. Interacts with DGKZ. Interacts with MCC. Interacts (via PDZ domains) with SLC9A3; directs SLC9A3 membrane insertion from early endosomes to the plasma membrane.

The protein resides in the early endosome membrane. It localises to the cytoplasm. Its subcellular location is the cytosol. Involved in the retrograde transport from endosome to plasma membrane, a trafficking pathway that promotes the recycling of internalized transmembrane proteins. Following internalization, endocytosed transmembrane proteins are delivered to early endosomes and recycled to the plasma membrane instead of being degraded in lysosomes. SNX27 specifically binds and directs sorting of a subset of transmembrane proteins containing a PDZ-binding motif at the C-terminus: following interaction with target transmembrane proteins, associates with the retromer complex, preventing entry into the lysosomal pathway, and promotes retromer-tubule based plasma membrane recycling. SNX27 also binds with the WASH complex. Interacts with membranes containing phosphatidylinositol-3-phosphate (PtdIns(3P)). May participate in establishment of natural killer cell polarity. Recruits CYTIP to early endosomes. In Bos taurus (Bovine), this protein is Sorting nexin-27 (SNX27).